The following is a 491-amino-acid chain: Cytochrome P450 2B2 (491 aa).

Ser128 is modified (phosphoserine; by PKA). Cys436 contributes to the heme binding site.

This sequence belongs to the cytochrome P450 family. Heme is required as a cofactor. Phosphorylation is accompanied by a decrease in enzyme activity.

Its subcellular location is the endoplasmic reticulum membrane. The protein resides in the microsome membrane. It catalyses the reaction an organic molecule + reduced [NADPH--hemoprotein reductase] + O2 = an alcohol + oxidized [NADPH--hemoprotein reductase] + H2O + H(+). Functionally, cytochromes P450 are a group of heme-thiolate monooxygenases. In liver microsomes, this enzyme is involved in an NADPH-dependent electron transport pathway. It oxidizes a variety of structurally unrelated compounds, including steroids, fatty acids, and xenobiotics. The chain is Cytochrome P450 2B2 (Cyp2b2) from Rattus norvegicus (Rat).